The chain runs to 420 residues: D-tagatose-1,6-bisphosphate aldolase subunit GatZ (420 aa).

This sequence belongs to the GatZ/KbaZ family. GatZ subfamily. Forms a complex with GatY.

Its pathway is carbohydrate metabolism; D-tagatose 6-phosphate degradation; D-glyceraldehyde 3-phosphate and glycerone phosphate from D-tagatose 6-phosphate: step 2/2. Functionally, component of the tagatose-1,6-bisphosphate aldolase GatYZ that is required for full activity and stability of the Y subunit. Could have a chaperone-like function for the proper and stable folding of GatY. When expressed alone, GatZ does not show any aldolase activity. Is involved in the catabolism of galactitol. The protein is D-tagatose-1,6-bisphosphate aldolase subunit GatZ of Escherichia coli O7:K1 (strain IAI39 / ExPEC).